Consider the following 876-residue polypeptide: Alanine--tRNA ligase (876 aa).

Zn(2+) is bound by residues histidine 566, histidine 570, cysteine 668, and histidine 672.

It belongs to the class-II aminoacyl-tRNA synthetase family. The cofactor is Zn(2+).

It localises to the cytoplasm. It carries out the reaction tRNA(Ala) + L-alanine + ATP = L-alanyl-tRNA(Ala) + AMP + diphosphate. In terms of biological role, catalyzes the attachment of alanine to tRNA(Ala) in a two-step reaction: alanine is first activated by ATP to form Ala-AMP and then transferred to the acceptor end of tRNA(Ala). Also edits incorrectly charged Ser-tRNA(Ala) and Gly-tRNA(Ala) via its editing domain. The protein is Alanine--tRNA ligase of Petrotoga mobilis (strain DSM 10674 / SJ95).